Consider the following 389-residue polypeptide: Phosphoglycerate kinase (389 aa).

Substrate contacts are provided by residues 21-23 (DLN), Arg36, 59-62 (HLGR), Arg112, and Arg145. ATP contacts are provided by residues Lys196, Glu318, and 344–347 (GGDS).

It belongs to the phosphoglycerate kinase family. As to quaternary structure, monomer.

It localises to the cytoplasm. The catalysed reaction is (2R)-3-phosphoglycerate + ATP = (2R)-3-phospho-glyceroyl phosphate + ADP. It participates in carbohydrate degradation; glycolysis; pyruvate from D-glyceraldehyde 3-phosphate: step 2/5. This Desulfovibrio desulfuricans (strain ATCC 27774 / DSM 6949 / MB) protein is Phosphoglycerate kinase.